The chain runs to 494 residues: uncharacterized protein (494 aa).

This sequence belongs to the TPP enzyme family.

This is an uncharacterized protein from Methanocaldococcus jannaschii (strain ATCC 43067 / DSM 2661 / JAL-1 / JCM 10045 / NBRC 100440) (Methanococcus jannaschii).